Consider the following 1009-residue polypeptide: DENN domain-containing protein 2A (1009 aa).

Disordered regions lie at residues 15–153 (AEAS…LRFQ), 171–334 (KDGS…HRKS), 434–479 (KLLD…KKRK), and 498–532 (KRVK…LKAH). 4 stretches are compositionally biased toward basic and acidic residues: residues 45–59 (NIKD…KKEV), 130–147 (QPER…EPRL), 218–247 (HPSD…DRSL), and 275–284 (HAGEGDKDGK). A compositionally biased stretch (pro residues) spans 297–314 (PPLPSLPPPPLPSSPPPS). Residues 434 to 443 (KLLDTRKLSR) show a composition bias toward basic and acidic residues. Residues 503 to 513 (LSQSMESNSGK) are compositionally biased toward polar residues. Ser-551 carries the post-translational modification Phosphoserine. The region spanning 566–715 (EYFVVVSLHK…PFPALGKTIL (150 aa)) is the uDENN domain. Residues 737-870 (RLEHVDFESL…LQVALEHILE (134 aa)) form the cDENN domain. The dDENN domain maps to 872 to 969 (RNELACEQDE…QERELRRQDA (98 aa)).

The protein resides in the cytoplasm. Its subcellular location is the cytoskeleton. In terms of biological role, guanine nucleotide exchange factor (GEF) which may activate RAB9A and RAB9B. Promotes the exchange of GDP to GTP, converting inactive GDP-bound Rab proteins into their active GTP-bound form. May play a role in late endosomes back to trans-Golgi network/TGN transport. This Homo sapiens (Human) protein is DENN domain-containing protein 2A (DENND2A).